The sequence spans 490 residues: C-type lectin domain family 14 member A (490 aa).

Positions 1-21 (MRPAFALCLLWQALWPGPGGG) are cleaved as a signal peptide. The Extracellular portion of the chain corresponds to 22 to 397 (EHPTADRAGC…TPQAFDSSSA (376 aa)). One can recognise a C-type lectin domain in the interval 33 to 173 (ASGACYSLHH…LRANGYLCKY (141 aa)). A disulfide bond links Cys143 and Cys162. The N-linked (GlcNAc...) asparagine glycan is linked to Asn189. Residues 245–287 (PCPGRYLRAGKCAELPNCLDDLGGFACECATGFELGKDGRSCV) enclose the EGF-like domain. The interval 286–349 (CVTSGEGQPT…VTSIPEIPRW (64 aa)) is disordered. A compositionally biased stretch (low complexity) spans 301–315 (VPTRRPPATATSPVP). An N-linked (GlcNAc...) asparagine glycan is attached at Asn381. A helical transmembrane segment spans residues 398–418 (VVFIFVSTAVVVLVILTMTVL). Residues 419–490 (GLVKLCFHES…AESPLGSSDA (72 aa)) are Cytoplasmic-facing. The interval 428 to 461 (SPSSQPRKESMGPPGLESDPEPAALGSSSAHCTN) is disordered.

It localises to the membrane. The protein is C-type lectin domain family 14 member A (CLEC14A) of Homo sapiens (Human).